Reading from the N-terminus, the 116-residue chain is Large-conductance mechanosensitive channel (116 aa).

The next 2 membrane-spanning stretches (helical) occupy residues 7–27 and 64–84; these read EFAL…GAAF and GLFI…FIFV.

The protein belongs to the MscL family. As to quaternary structure, homopentamer.

The protein resides in the cell membrane. Channel that opens in response to stretch forces in the membrane lipid bilayer. May participate in the regulation of osmotic pressure changes within the cell. The protein is Large-conductance mechanosensitive channel of Staphylococcus epidermidis (strain ATCC 35984 / DSM 28319 / BCRC 17069 / CCUG 31568 / BM 3577 / RP62A).